We begin with the raw amino-acid sequence, 1380 residues long: DNA-directed RNA polymerase subunit beta (1380 aa).

Belongs to the RNA polymerase beta chain family. The RNAP catalytic core consists of 2 alpha, 1 beta, 1 beta' and 1 omega subunit. When a sigma factor is associated with the core the holoenzyme is formed, which can initiate transcription.

The enzyme catalyses RNA(n) + a ribonucleoside 5'-triphosphate = RNA(n+1) + diphosphate. In terms of biological role, DNA-dependent RNA polymerase catalyzes the transcription of DNA into RNA using the four ribonucleoside triphosphates as substrates. The chain is DNA-directed RNA polymerase subunit beta from Rhizobium rhizogenes (strain K84 / ATCC BAA-868) (Agrobacterium radiobacter).